The chain runs to 297 residues: Cell division protein FtsX (297 aa).

Over 1–24 the chain is Cytoplasmic; the sequence is MKAKTLSRHLREGVKNLSRNGWMT. A helical transmembrane segment spans residues 25–45; that stretch reads FASVSAVTVTLLLVGVFLTAI. Residues 46 to 171 are Extracellular-facing; the sequence is MNMNHFATKV…LFDTVKTGRN (126 aa). Residues 172–192 traverse the membrane as a helical segment; the sequence is IGIVLIAGLLFTAMFLISNTI. Residues 193-219 are Cytoplasmic-facing; it reads KITIYARSTEIEIMKLVGATNWFIRWP. The chain crosses the membrane as a helical span at residues 220-240; that stretch reads FLLEGLFLGVLGSIIPIGLIL. At 241 to 270 the chain is on the extracellular side; the sequence is VTYNSLQGMFNEKLGGTIFELLPYSPFVFQ. The chain crosses the membrane as a helical span at residues 271–291; that stretch reads LAGLLVLIGALIGMWGSVMSI. Residues 292-297 are Cytoplasmic-facing; that stretch reads RRFLKV.

Belongs to the ABC-4 integral membrane protein family. FtsX subfamily. In terms of assembly, interacts with FtsE.

The protein resides in the cell membrane. In terms of biological role, part of the ABC transporter FtsEX involved in asymmetric cellular division facilitating the initiation of sporulation. This chain is Cell division protein FtsX, found in Bacillus anthracis.